We begin with the raw amino-acid sequence, 480 residues long: Zinc finger protein ztf-6 (480 aa).

Disordered stretches follow at residues 92 to 160 (CHDS…TMMV), 174 to 198 (GTNG…EEHD), 282 to 307 (LDAG…PTAS), and 328 to 351 (DANT…MKVP). Low complexity-rich tracts occupy residues 95–105 (SATSTTTTVSH), 131–145 (SSIE…SSSV), 174–187 (GTNG…TSSS), and 286–296 (SSENDGSTSSS). 2 C2H2-type zinc fingers span residues 359-383 (YICP…FVTH) and 388-410 (FNCD…QKIH). The C2H2-type 3; degenerate zinc-finger motif lies at 416-441 (YQCRGCGTNYTTQNGLRLHRQRNPAC). The tract at residues 461-480 (ALSGPLSKNSSPTKQMVSAP) is disordered.

Probable transcription factor, involved in regulation of dopamine neuron lineage specification. May play a role in maintaining robustness of the Wnt/beta-catenin asymmetry pathway. This Caenorhabditis elegans protein is Zinc finger protein ztf-6.